Here is a 273-residue protein sequence, read N- to C-terminus: Type II pantothenate kinase (273 aa).

Residue 8–15 participates in ATP binding; sequence DAGGTLTK. Glu76 functions as the Proton acceptor in the catalytic mechanism. ATP contacts are provided by residues Thr105, 127–131, Phe143, and Ser230; that span reads GGTIM.

It belongs to the type II pantothenate kinase family. Homodimer.

The protein resides in the cytoplasm. The catalysed reaction is (R)-pantothenate + ATP = (R)-4'-phosphopantothenate + ADP + H(+). It functions in the pathway cofactor biosynthesis; coenzyme A biosynthesis; CoA from (R)-pantothenate: step 1/5. In terms of biological role, catalyzes the phosphorylation of pantothenate (Pan), the first step in CoA biosynthesis. The polypeptide is Type II pantothenate kinase (Bacillus cereus (strain ATCC 14579 / DSM 31 / CCUG 7414 / JCM 2152 / NBRC 15305 / NCIMB 9373 / NCTC 2599 / NRRL B-3711)).